A 168-amino-acid chain; its full sequence is 3-isopropylmalate dehydratase small subunit (168 aa).

This sequence belongs to the LeuD family. LeuD type 2 subfamily. In terms of assembly, heterodimer of LeuC and LeuD.

The enzyme catalyses (2R,3S)-3-isopropylmalate = (2S)-2-isopropylmalate. The protein operates within amino-acid biosynthesis; L-leucine biosynthesis; L-leucine from 3-methyl-2-oxobutanoate: step 2/4. In terms of biological role, catalyzes the isomerization between 2-isopropylmalate and 3-isopropylmalate, via the formation of 2-isopropylmaleate. This Thermodesulfovibrio yellowstonii (strain ATCC 51303 / DSM 11347 / YP87) protein is 3-isopropylmalate dehydratase small subunit.